A 419-amino-acid chain; its full sequence is Phosphoglycerate kinase (419 aa).

The (2R)-3-phosphoglycerate site is built by Val-24, Asp-25, Phe-26, Asn-27, Arg-40, Ser-63, His-64, Gly-66, Arg-67, Leu-122, Arg-123, His-169, and Arg-170. Gly-213 contributes to the ADP binding site. Residue Gly-213 participates in CDP binding. Residues Ala-214 and Lys-215 each coordinate AMP. Ala-214 contributes to the ATP binding site. Position 214 (Ala-214) interacts with Mg(2+). Mg(2+) is bound by residues Ala-217 and Asp-218. Residue Asp-218 participates in CDP binding. Residue Lys-219 coordinates AMP. Lys-219 contributes to the ATP binding site. Gly-237 serves as a coordination point for ADP. CDP is bound at residue Gly-237. AMP is bound by residues Gly-238 and Gly-313. ATP contacts are provided by Gly-238 and Gly-313. CDP-binding residues include Gly-338 and Phe-343. Position 343 (Phe-343) interacts with ADP. Glu-344 contributes to the AMP binding site. ATP-binding residues include Glu-344, Asp-375, and Thr-376. Mg(2+) is bound at residue Asp-375.

This sequence belongs to the phosphoglycerate kinase family. As to quaternary structure, monomer. Requires Mg(2+) as cofactor.

The catalysed reaction is (2R)-3-phosphoglycerate + ATP = (2R)-3-phospho-glyceroyl phosphate + ADP. It functions in the pathway carbohydrate degradation; glycolysis; pyruvate from D-glyceraldehyde 3-phosphate: step 2/5. This chain is Phosphoglycerate kinase (PGK), found in Sterkiella nova (Ciliate).